Reading from the N-terminus, the 750-residue chain is Polyribonucleotide nucleotidyltransferase (750 aa).

Residues Asp-492 and Asp-498 each coordinate Mg(2+). The KH domain occupies 559–618; that stretch reads PQLSVVEVNPEIIRVIIGPGGKNIKAITSATGASIDIEDSGRISIFAPTKESMDMAREMV. An S1 motif domain is found at 628 to 695; it reads GKNYTAKVRK…NDGRVRASRK (68 aa). Residues 705-750 are disordered; sequence EWDPADTARPPRKPRDRDDRGDRGGRGDRGDRGGRNGRGGDRRDRR. Residues 717–750 show a composition bias toward basic and acidic residues; sequence KPRDRDDRGDRGGRGDRGDRGGRNGRGGDRRDRR.

The protein belongs to the polyribonucleotide nucleotidyltransferase family. Mg(2+) serves as cofactor.

It is found in the cytoplasm. It catalyses the reaction RNA(n+1) + phosphate = RNA(n) + a ribonucleoside 5'-diphosphate. In terms of biological role, involved in mRNA degradation. Catalyzes the phosphorolysis of single-stranded polyribonucleotides processively in the 3'- to 5'-direction. The polypeptide is Polyribonucleotide nucleotidyltransferase (Oleidesulfovibrio alaskensis (strain ATCC BAA-1058 / DSM 17464 / G20) (Desulfovibrio alaskensis)).